A 242-amino-acid chain; its full sequence is 7-cyano-7-deazaguanine synthase (242 aa).

14 to 24 (FSGGQDSATCL) serves as a coordination point for ATP. 4 residues coordinate Zn(2+): C202, C217, C220, and C223.

Belongs to the QueC family. The cofactor is Zn(2+).

It catalyses the reaction 7-carboxy-7-deazaguanine + NH4(+) + ATP = 7-cyano-7-deazaguanine + ADP + phosphate + H2O + H(+). Its pathway is purine metabolism; 7-cyano-7-deazaguanine biosynthesis. Catalyzes the ATP-dependent conversion of 7-carboxy-7-deazaguanine (CDG) to 7-cyano-7-deazaguanine (preQ(0)). The chain is 7-cyano-7-deazaguanine synthase from Rhodopseudomonas palustris (strain BisA53).